The sequence spans 346 residues: MAVGLAEHDKEAWGRLPFSLTIADISQDDEPLIYVNRAFEQMTGYSRSSVVGRNCRFLQGEKTDPGAVERLAKAIRNCEEVEETIYNYRADGEGFWNHLLMGPLEDQDEKCRYFVGIQVDMGQSESPDRATELDRQLAEVQHRVKNHLAMIVSMIRIQSSQAGGVGSQFDSLSRRVEALQLLYQEMDIAGAAKATDKIIPLGAYLGRIASAINHIDGRGAIKVNVQADTVDVPVETAGRIGLLVSEVLTNALQHAFSDRASGVVQLRSSVMSGEQLRVTVEDDGRGIPEDCDWPNEGNLGSRIVRQLVQGLGAELNVTRGGTGTIVNIDIPLSQQKTLIADERTKD.

The PAS domain maps to 8–82; that stretch reads HDKEAWGRLP…KAIRNCEEVE (75 aa). An S-4a-FMN cysteine modification is found at cysteine 55. The region spanning 79-133 is the PAC domain; it reads EEVEETIYNYRADGEGFWNHLLMGPLEDQDEKCRYFVGIQVDMGQSESPDRATEL. In terms of domain architecture, Histidine kinase spans 139-334; the sequence is EVQHRVKNHL…IVNIDIPLSQ (196 aa). At histidine 142 the chain carries Phosphohistidine; by autocatalysis.

In terms of processing, FMN binds covalently to cysteine after exposure to blue light and this bond is spontaneously broken in the dark.

The catalysed reaction is ATP + protein L-histidine = ADP + protein N-phospho-L-histidine.. Photosensitive kinase that is involved in increased bacterial virulence upon exposure to light. The protein is Blue-light-activated histidine kinase 2 of Erythrobacter litoralis (strain HTCC2594).